The following is a 344-amino-acid chain: Dihydroorotase (344 aa).

Zn(2+) is bound by residues His-14 and His-16. Substrate contacts are provided by residues 16–18 (HLR) and Asn-42. The Zn(2+) site is built by Lys-99, His-136, and His-174. Lys-99 is subject to N6-carboxylysine. His-136 lines the substrate pocket. Position 219 (Leu-219) interacts with substrate. Asp-247 serves as a coordination point for Zn(2+). Residue Asp-247 is part of the active site. 2 residues coordinate substrate: His-251 and Ala-263.

Belongs to the metallo-dependent hydrolases superfamily. DHOase family. Class II DHOase subfamily. Homodimer. Requires Zn(2+) as cofactor.

The enzyme catalyses (S)-dihydroorotate + H2O = N-carbamoyl-L-aspartate + H(+). Its pathway is pyrimidine metabolism; UMP biosynthesis via de novo pathway; (S)-dihydroorotate from bicarbonate: step 3/3. Functionally, catalyzes the reversible cyclization of carbamoyl aspartate to dihydroorotate. The polypeptide is Dihydroorotase (Teredinibacter turnerae (strain ATCC 39867 / T7901)).